Consider the following 702-residue polypeptide: MNSLFASTARGLEELLKTELEKLGAVGCQVVQGGVHFQGDTRLIYQSLMWSRLASRIILPMGECKVYSDLDLYLGVQAINWTEIFNPGATFAVHFSGLNDTIRNSQYGAMKVKDAIVDAFTRKNLPRPNVDRESPDLRINVWLNKETASIALDLSGDGLHLRGYRDRTGLAPIKETLAAAIVMRSGWQPGTPLLDPMCGSGTLLIEAAMWATDRAPGLHRGHWGFSGWAQHDETIWQEVKAEAQTRARKGLAEYSSHFYGSDSDARVIERARSNARRAGIGELITFEVKDVAQLSNPLPKGPYGTVISNPPYGERLDSEPALIALHSLLGRTMKNQFGGWNLSLFSASPDLLGSLQLRADKQFKAKNGPLDCVQKNYHIAETTADSKPATVAEDYANRLRKNLKKLEKWARQEGIECYRLYDADLPEYNVAVDRYGDRAVIQEYAPPKTVDAQKARQRLFDIIAATLSVLGIPPNKLVLKTRERQKGKNQYQKMSEKGEFLEVSEYNARLWVNLTDYLDTGLFLDHRIARRMLGEMSKGKDFLNLFSYTGSASVHAGLGGARSTTTVDMSRTYLEWAERNLRLNGLSGRAHRLIQADCLGWLREANEQFDLIFIDPPTFSNSKRMEESFDVQRDHVALMKDLKRLLRKGGTIMFSNNKRGFRMDLEGLAELGLTAQEITQKTLSPDFARNRQIHNCWLIRAA.

Residues 43 to 154 (LIYQSLMWSR…KETASIALDL (112 aa)) form the THUMP domain.

It belongs to the methyltransferase superfamily. RlmKL family.

The protein resides in the cytoplasm. The enzyme catalyses guanosine(2445) in 23S rRNA + S-adenosyl-L-methionine = N(2)-methylguanosine(2445) in 23S rRNA + S-adenosyl-L-homocysteine + H(+). It catalyses the reaction guanosine(2069) in 23S rRNA + S-adenosyl-L-methionine = N(2)-methylguanosine(2069) in 23S rRNA + S-adenosyl-L-homocysteine + H(+). In terms of biological role, specifically methylates the guanine in position 2445 (m2G2445) and the guanine in position 2069 (m7G2069) of 23S rRNA. This chain is Ribosomal RNA large subunit methyltransferase K/L, found in Salmonella paratyphi B (strain ATCC BAA-1250 / SPB7).